Reading from the N-terminus, the 270-residue chain is Large ribosomal subunit protein bL21m (270 aa).

The transit peptide at 1–68 (MASLRCFREL…HWYRSQDRCF (68 aa)) directs the protein to the mitochondrion. The disordered stretch occupies residues 68–113 (FSSNTKDTDEDEESSEGEDDDEEEGEDFEDSADMEVEREYSPAEKV). Acidic residues predominate over residues 75-101 (TDEDEESSEGEDDDEEEGEDFEDSADM). The span at 102-113 (EVEREYSPAEKV) shows a compositional bias: basic and acidic residues.

The protein belongs to the bacterial ribosomal protein bL21 family. As to quaternary structure, component of the mitochondrial ribosome large subunit. As to expression, constitutively expressed in roots, stems, leaves, flowers, pistils and siliques.

Its subcellular location is the mitochondrion. This protein binds to 23S ribosomal RNA in the presence of protein L20. Required for karyogamy during female gametophyte development, when the two polar nuclei fuse to form the diploid central cell nucleus, and during double fertilization of the egg cell and the central cell. The sequence is that of Large ribosomal subunit protein bL21m from Arabidopsis thaliana (Mouse-ear cress).